The sequence spans 149 residues: Small heat shock protein IbpB (149 aa).

A sHSP domain is found at 26–137 (SQEPIDFPPY…QPQRIAIGGG (112 aa)).

Belongs to the small heat shock protein (HSP20) family. As to quaternary structure, homodimer. Forms homomultimers of about 100-150 subunits at optimal growth temperatures. Conformation changes to oligomers at high temperatures or high ionic concentrations. The decrease in size of the multimers is accompanied by an increase in chaperone activity.

The protein localises to the cytoplasm. In terms of biological role, associates with aggregated proteins, together with IbpA, to stabilize and protect them from irreversible denaturation and extensive proteolysis during heat shock and oxidative stress. Aggregated proteins bound to the IbpAB complex are more efficiently refolded and reactivated by the ATP-dependent chaperone systems ClpB and DnaK/DnaJ/GrpE. Its activity is ATP-independent. This chain is Small heat shock protein IbpB, found in Pectobacterium carotovorum subsp. carotovorum (strain PC1).